The sequence spans 878 residues: Alanine--tRNA ligase (878 aa).

The Zn(2+) site is built by His-564, His-568, Cys-665, and His-669.

This sequence belongs to the class-II aminoacyl-tRNA synthetase family. Zn(2+) serves as cofactor.

The protein resides in the cytoplasm. The enzyme catalyses tRNA(Ala) + L-alanine + ATP = L-alanyl-tRNA(Ala) + AMP + diphosphate. Catalyzes the attachment of alanine to tRNA(Ala) in a two-step reaction: alanine is first activated by ATP to form Ala-AMP and then transferred to the acceptor end of tRNA(Ala). Also edits incorrectly charged Ser-tRNA(Ala) and Gly-tRNA(Ala) via its editing domain. This Natranaerobius thermophilus (strain ATCC BAA-1301 / DSM 18059 / JW/NM-WN-LF) protein is Alanine--tRNA ligase.